The primary structure comprises 827 residues: Striatin homolog (827 aa).

Residues Arg37–Lys109 adopt a coiled-coil conformation. Disordered stretches follow at residues Lys99 to Asn123, Lys181 to Ser270, Ser311 to Ser362, and Glu400 to Met459. A compositionally biased stretch (basic and acidic residues) spans Lys109–Asn123. 2 stretches are compositionally biased toward low complexity: residues Asn184–Ser270 and Ser311–Gln334. Over residues Glu337–Lys346 the composition is skewed to polar residues. Composition is skewed to low complexity over residues Gln347–Gln356, Thr416–Ser432, and Ser439–Thr453. 6 WD repeats span residues Ser495–Lys534, Gly548–Tyr593, Gly610–Thr649, Asn709–Ser748, Ala751–Asp790, and Lys797–Asn827.

The protein belongs to the WD repeat striatin family. Part of the core of STRIPAK complexes.

It is found in the cytoplasm. Its subcellular location is the membrane. Calmodulin-binding scaffolding protein which is the center of the striatin-interacting phosphatase and kinase (STRIPAK) complexes. STRIPAK complexes have critical roles in protein (de)phosphorylation and are regulators of multiple signaling pathways including Hippo, MAPK, nuclear receptor and cytoskeleton remodeling. Different types of STRIPAK complexes are involved in a variety of biological processes such as cell growth, differentiation, apoptosis, metabolism and immune regulation. The polypeptide is Striatin homolog (strn) (Dictyostelium discoideum (Social amoeba)).